Consider the following 445-residue polypeptide: Phosphoglucosamine mutase (445 aa).

Ser99 serves as the catalytic Phosphoserine intermediate. 4 residues coordinate Mg(2+): Ser99, Asp242, Asp244, and Asp246. Ser99 carries the post-translational modification Phosphoserine.

It belongs to the phosphohexose mutase family. It depends on Mg(2+) as a cofactor. In terms of processing, activated by phosphorylation.

The catalysed reaction is alpha-D-glucosamine 1-phosphate = D-glucosamine 6-phosphate. In terms of biological role, catalyzes the conversion of glucosamine-6-phosphate to glucosamine-1-phosphate. This is Phosphoglucosamine mutase from Campylobacter jejuni subsp. jejuni serotype O:23/36 (strain 81-176).